Consider the following 314-residue polypeptide: Melanoma-associated antigen 6 (314 aa).

A compositionally biased stretch (basic and acidic residues) spans 1–20; the sequence is MPLEQRSQHCKPEEGLEARG. The segment at 1–99 is disordered; it reads MPLEQRSQHC…QEEEGPSTFP (99 aa). Residues 21–44 show a composition bias toward low complexity; sequence EALGLVGAQAPATEEQEAASSSST. The segment covering 65 to 87 has biased composition (polar residues); sequence PQGASSLPTTMNYPLWSQSYEDS. The 200-residue stretch at 109 to 308 folds into the MAGE domain; the sequence is LSRKVAKLVH…ISYPLLHEWA (200 aa).

As to quaternary structure, interacts with TRIM28. Post-translationally, ubiquitinated by the DCX(DCAF12) complex specifically recognizes the diglutamate (Glu-Glu) at the C-terminus, leading to its degradation. In terms of tissue distribution, expressed in many tumors of several types, such as melanoma, head and neck squamous cell carcinoma, lung carcinoma and breast carcinoma, but not in normal tissues except for testes.

In terms of biological role, activator of ubiquitin ligase activity of RING-type zinc finger-containing E3 ubiquitin-protein ligases that acts as a repressor of autophagy. May enhance ubiquitin ligase activity of TRIM28 and stimulate p53/TP53 ubiquitination by TRIM28. Proposed to act through recruitment and/or stabilization of the Ubl-conjugating enzyme (E2) at the E3:substrate complex. May play a role in tumor transformation or aspects of tumor progression. In vitro promotes cell viability in melanoma cell lines. This is Melanoma-associated antigen 6 from Homo sapiens (Human).